The chain runs to 560 residues: Formate--tetrahydrofolate ligase (560 aa).

ATP is bound at residue 69–76 (TPAGEGKS).

This sequence belongs to the formate--tetrahydrofolate ligase family.

It catalyses the reaction (6S)-5,6,7,8-tetrahydrofolate + formate + ATP = (6R)-10-formyltetrahydrofolate + ADP + phosphate. It functions in the pathway one-carbon metabolism; tetrahydrofolate interconversion. In Listeria monocytogenes serotype 4a (strain HCC23), this protein is Formate--tetrahydrofolate ligase.